The chain runs to 243 residues: Protein-L-isoaspartate O-methyltransferase 2 (243 aa).

A disordered region spans residues 21–42 (DACADRGHPSAERSTPETERRR). The span at 23 to 42 (CADRGHPSAERSTPETERRR) shows a compositional bias: basic and acidic residues. Ser94 is a catalytic residue.

Belongs to the methyltransferase superfamily. L-isoaspartyl/D-aspartyl protein methyltransferase family.

It is found in the cytoplasm. The enzyme catalyses [protein]-L-isoaspartate + S-adenosyl-L-methionine = [protein]-L-isoaspartate alpha-methyl ester + S-adenosyl-L-homocysteine. Its function is as follows. Catalyzes the methyl esterification of L-isoaspartyl residues in peptides and proteins that result from spontaneous decomposition of normal L-aspartyl and L-asparaginyl residues. It plays a role in the repair and/or degradation of damaged proteins. This chain is Protein-L-isoaspartate O-methyltransferase 2, found in Anaeromyxobacter sp. (strain Fw109-5).